Consider the following 362-residue polypeptide: Red-sensitive opsin (362 aa).

Topologically, residues 1-49 are extracellular; the sequence is MAAWEAAFAARRRHEEEDTTRDSVFTYTNSNNTRGPFEGPNYHIAPRWV. An N-linked (GlcNAc...) asparagine glycan is attached at N31. Residues 50–74 form a helical membrane-spanning segment; it reads YNLTSVWMIFVVAASVFTNGLVLVA. Over 75–86 the chain is Cytoplasmic; it reads TWKFKKLRHPLN. The helical transmembrane segment at 87–112 threads the bilayer; that stretch reads WILVNLAVADLGETVIASTISVINQI. Residues 113–126 lie on the Extracellular side of the membrane; it reads SGYFILGHPMCVVE. A disulfide bond links C123 and C200. The helical transmembrane segment at 127–146 threads the bilayer; the sequence is GYTVSACGITALWSLAIISW. The Cytoplasmic portion of the chain corresponds to 147-165; that stretch reads ERWFVVCKPFGNIKFDGKL. Residues 166 to 189 traverse the membrane as a helical segment; sequence AVAGILFSWLWSCAWTAPPIFGWS. Over 190-215 the chain is Extracellular; sequence RYWPHGLKTSCGPDVFSGSSDPGVQS. Residues 216–243 form a helical membrane-spanning segment; that stretch reads YMVVLMVTCCFFPLAIIILCYLQVWLAI. Residues 244–265 lie on the Cytoplasmic side of the membrane; sequence RAVAAQQKESESTQKAEKEVSR. Residues 266–289 form a helical membrane-spanning segment; that stretch reads MVVVMIVAYCFCWGPYTFFACFAA. Over 290–297 the chain is Extracellular; sequence ANPGYAFH. Residues 298-322 form a helical membrane-spanning segment; it reads PLAAALPAYFAKSATIYNPIIYVFM. An N6-(retinylidene)lysine modification is found at K309. Over 323 to 362 the chain is Cytoplasmic; the sequence is NRQFRNCILQLFGKKVDDGSEVSTSRTEVSSVSNSSVSPA.

This sequence belongs to the G-protein coupled receptor 1 family. Opsin subfamily. Post-translationally, phosphorylated on some or all of the serine and threonine residues present in the C-terminal region. The color pigments are found in the cone photoreceptor cells.

The protein resides in the membrane. Functionally, visual pigments are the light-absorbing molecules that mediate vision. They consist of an apoprotein, opsin, covalently linked to cis-retinal. This is Red-sensitive opsin from Gallus gallus (Chicken).